The chain runs to 369 residues: 4-hydroxy-3-methylbut-2-en-1-yl diphosphate synthase (flavodoxin) (369 aa).

The [4Fe-4S] cluster site is built by C270, C273, C305, and E312.

It belongs to the IspG family. [4Fe-4S] cluster is required as a cofactor.

It catalyses the reaction (2E)-4-hydroxy-3-methylbut-2-enyl diphosphate + oxidized [flavodoxin] + H2O + 2 H(+) = 2-C-methyl-D-erythritol 2,4-cyclic diphosphate + reduced [flavodoxin]. The protein operates within isoprenoid biosynthesis; isopentenyl diphosphate biosynthesis via DXP pathway; isopentenyl diphosphate from 1-deoxy-D-xylulose 5-phosphate: step 5/6. In terms of biological role, converts 2C-methyl-D-erythritol 2,4-cyclodiphosphate (ME-2,4cPP) into 1-hydroxy-2-methyl-2-(E)-butenyl 4-diphosphate. The polypeptide is 4-hydroxy-3-methylbut-2-en-1-yl diphosphate synthase (flavodoxin) (Psychromonas ingrahamii (strain DSM 17664 / CCUG 51855 / 37)).